A 238-amino-acid chain; its full sequence is Ribitol-5-phosphate cytidylyltransferase 1 (238 aa).

CTP is bound by residues 7–10 and 81–87; these read LAGG and GSDRNDT.

The protein belongs to the IspD/TarI cytidylyltransferase family. TarI subfamily.

It catalyses the reaction D-ribitol 5-phosphate + CTP + H(+) = CDP-L-ribitol + diphosphate. The protein operates within cell wall biogenesis; poly(ribitol phosphate) teichoic acid biosynthesis. Catalyzes the transfer of the cytidylyl group of CTP to D-ribitol 5-phosphate. The polypeptide is Ribitol-5-phosphate cytidylyltransferase 1 (Staphylococcus aureus (strain bovine RF122 / ET3-1)).